A 259-amino-acid polypeptide reads, in one-letter code: uncharacterized protein (259 aa).

Histidine 9, histidine 11, glutamate 97, histidine 133, histidine 157, and aspartate 207 together coordinate a divalent metal cation.

It belongs to the metallo-dependent hydrolases superfamily. TatD-type hydrolase family. A divalent metal cation is required as a cofactor.

This is an uncharacterized protein from Escherichia coli (strain K12).